A 148-amino-acid polypeptide reads, in one-letter code: Urease accessory protein UreE (148 aa).

Belongs to the UreE family.

It is found in the cytoplasm. In terms of biological role, involved in urease metallocenter assembly. Binds nickel. Probably functions as a nickel donor during metallocenter assembly. This is Urease accessory protein UreE from Geobacillus kaustophilus (strain HTA426).